The following is a 651-amino-acid chain: Transcription factor E2-alpha (651 aa).

3 disordered regions span residues 32 to 107 (ANGK…SERN), 131 to 208 (LSLS…KTPS), and 341 to 378 (DHSS…ALSP). 3 stretches are compositionally biased toward low complexity: residues 56–73 (SSGS…FDPS), 131–148 (LSLS…KSSS), and 341–354 (DHSS…PSTP). A phosphoserine mark is found at serine 135 and serine 140. Threonine 353 carries the phosphothreonine modification. Serine 357 is subject to Phosphoserine. Residue arginine 369 is modified to Omega-N-methylarginine. Phosphoserine is present on serine 377. Positions 387–422 (LSKMEDRLDEAIHVLRSHAVGTASDLHGLLPGHGAL) are leucine-zipper. The interval 457–549 (HNHASLPSQP…KAEREKERRV (93 aa)) is disordered. Residues 461-479 (SLPSQPSSLPDLSQRPPDS) are compositionally biased toward low complexity. Residue lysine 496 forms a Glycyl lysine isopeptide (Lys-Gly) (interchain with G-Cter in SUMO2) linkage. A Phosphoserine modification is found at serine 526. Aspartate 528 carries the post-translational modification Phosphothreonine. A Phosphoserine modification is found at aspartate 533. The segment covering 539 to 549 (QKAEREKERRV) has biased composition (basic and acidic residues). A bHLH domain is found at 546 to 599 (ERRVANNARERLRVRDINEAFKELGRMCQLHLSSEKPQTKLLILHQAVAVILSL). A Glycyl lysine isopeptide (Lys-Gly) (interchain with G-Cter in SUMO2) cross-link involves residue lysine 622.

Homodimer. Heterodimer; efficient DNA binding requires dimerization with another bHLH protein. Forms a heterodimer with TWIST1 and TWIST2. Forms a heterodimer with NEUROD1; the heterodimer is inhibited in presence of ID2, but not NR0B2, to E-box element. Forms a heterodimer with TCF15; the heterodimer binds E-box element. Forms a heterodimer with MYOG; heterodimerization enhances MYOG DNA-binding and transcriptional activities. Forms a heterodimer with ATOH8; repress transcription of TCF3 and TCF3-NEUROG3 dimer-induced transactivation of E box-dependent promoters. Component of a nuclear TAL-1 complex composed at least of CBFA2T3, LDB1, TAL1 and TCF3. Interacts with NEUROD2. Interacts with EP300. Interacts with PTF1A, TGFB1I1 and UBE2I. Interacts with BHLHA9. Interacts with ASB2; the interaction is mediated by SKP2 and targets TCF3 for Notch-induced proteasomal degradation. Interacts with transcription factor ASCL5/AmeloD. As to quaternary structure, forms a heterodimer with ATOH7; required for ATOH7 DNA-binding. In terms of assembly, interacts with RALGAPA1. Interacts with FIGLA. Phosphorylated following NGF stimulation. In terms of processing, undergoes Notch-induced ubiquitination and subsequent proteasomal degradation which is mediated by ASB1 or ASB2, the substrate-recognition components of probable ECS E3 ubiquitin-protein ligase complexes.

The protein localises to the nucleus. Functionally, transcriptional regulator involved in the initiation of neuronal differentiation and mesenchymal to epithelial transition. Heterodimers between TCF3 and tissue-specific basic helix-loop-helix (bHLH) proteins play major roles in determining tissue-specific cell fate during embryogenesis, like muscle or early B-cell differentiation. Together with TCF15, required for the mesenchymal to epithelial transition. Dimers bind DNA on E-box motifs: 5'-CANNTG-3'. Binds to the kappa-E2 site in the kappa immunoglobulin gene enhancer. Binds to IEB1 and IEB2, which are short DNA sequences in the insulin gene transcription control region. In terms of biological role, facilitates ATOH7 binding to DNA at the consensus sequence 5'-CAGGTG-3', and positively regulates transcriptional activity. The sequence is that of Transcription factor E2-alpha (Tcf3) from Mus musculus (Mouse).